Reading from the N-terminus, the 380-residue chain is Sterol 24-C-methyltransferase ERG6B (380 aa).

It belongs to the class I-like SAM-binding methyltransferase superfamily. Erg6/SMT family.

The catalysed reaction is lanosterol + S-adenosyl-L-methionine = eburicol + S-adenosyl-L-homocysteine + H(+). The protein operates within steroid metabolism; ergosterol biosynthesis. Its function is as follows. Sterol 24-C-methyltransferase; part of the third module of ergosterol biosynthesis pathway that includes the late steps of the pathway. ERG6A and ERG6B methylate lanosterol at C-24 to produce eburicol. The third module or late pathway involves the ergosterol synthesis itself through consecutive reactions that mainly occur in the endoplasmic reticulum (ER) membrane. Firstly, the squalene synthase ERG9 catalyzes the condensation of 2 farnesyl pyrophosphate moieties to form squalene, which is the precursor of all steroids. Squalene synthase is crucial for balancing the incorporation of farnesyl diphosphate (FPP) into sterol and nonsterol isoprene synthesis. Secondly, squalene is converted into lanosterol by the consecutive action of the squalene epoxidase ERG1 and the lanosterol synthase ERG7. Then, the delta(24)-sterol C-methyltransferase ERG6 methylates lanosterol at C-24 to produce eburicol. Eburicol is the substrate of the sterol 14-alpha demethylase encoded by CYP51A, CYP51B and CYP51C, to yield 4,4,24-trimethyl ergosta-8,14,24(28)-trienol. CYP51B encodes the enzyme primarily responsible for sterol 14-alpha-demethylation, and plays an essential role in ascospore formation. CYP51A encodes an additional sterol 14-alpha-demethylase, induced on ergosterol depletion and responsible for the intrinsic variation in azole sensitivity. The third CYP51 isoform, CYP51C, does not encode a sterol 14-alpha-demethylase, but is required for full virulence on host wheat ears. The C-14 reductase ERG24 then reduces the C14=C15 double bond which leads to 4,4-dimethylfecosterol. A sequence of further demethylations at C-4, involving the C-4 demethylation complex containing the C-4 methylsterol oxidases ERG25, the sterol-4-alpha-carboxylate 3-dehydrogenase ERG26 and the 3-keto-steroid reductase ERG27, leads to the production of fecosterol via 4-methylfecosterol. ERG28 has a role as a scaffold to help anchor ERG25, ERG26 and ERG27 to the endoplasmic reticulum. The C-8 sterol isomerase ERG2 then catalyzes the reaction which results in unsaturation at C-7 in the B ring of sterols and thus converts fecosterol to episterol. The sterol-C5-desaturases ERG3A and ERG3BB then catalyze the introduction of a C-5 double bond in the B ring to produce 5-dehydroepisterol. The C-22 sterol desaturases ERG5A and ERG5B further convert 5-dehydroepisterol into ergosta-5,7,22,24(28)-tetraen-3beta-ol by forming the C-22(23) double bond in the sterol side chain. Finally, ergosta-5,7,22,24(28)-tetraen-3beta-ol is substrate of the C-24(28) sterol reductase ERG4 to produce ergosterol. The polypeptide is Sterol 24-C-methyltransferase ERG6B (Gibberella zeae (strain ATCC MYA-4620 / CBS 123657 / FGSC 9075 / NRRL 31084 / PH-1) (Wheat head blight fungus)).